Reading from the N-terminus, the 634-residue chain is MINIRFPDGSIREFEAGVNSLDVAKSISPSLAKATMAAYIDDQLKDAKDAINSNCELRLITVKDPEGLEILRHSCAHLLAHAVKELYPNTEVTIGPVVDNGFYYDFSFKESIGEADLPTIEKKMKELAKKSAPVSYRVVPKAEAIEFFKAQGENYKVEIIDSIADEQMKIYTQDNFSDLCRGPHIPNTSVLKAFKLTKLAGAYWRGNSDNEMLTRIYGTCWATKEDLEQYLNMLEEAEKRDHRKIGKVLDLFHFQEDSPGIAFWHDNGVRIWRQVEDYMRASNNKYGCSEIRTPLIADFSLWQKSGHASKYAENMFATKSENRDFAIRPMNCPTCVQVYNTKLHSYRDLPIRMAEFGIVHRNEPSGSLHGLLRVRSFTQDDGHIFCTPEQVEEEVILMVQQCFEVYKDFGFNDFAVKIALRPENRIGDDETWDKSEQMLKNALDANNVSYELLPGEGAFYGPKIEFHLKDAIGRSWQCGTIQLDFSMPQRLGATYIDKNGEKQVPVMLHRAIVGSLERFIGMLIEHYAGNLPLWLAPVQVAVMGISNNQDDYCKEVFIMLEKNGIRAKLDLRNEKIGFKIREHTLLRVPYLVILGKNEQEQKIITIRKHSGEDLGQMSVDDFCAFLDKQIQAKE.

A TGS domain is found at 1–61 (MINIRFPDGS…NSNCELRLIT (61 aa)). The interval 241 to 532 (DHRKIGKVLD…LIEHYAGNLP (292 aa)) is catalytic. The Zn(2+) site is built by Cys332, His383, and His509.

This sequence belongs to the class-II aminoacyl-tRNA synthetase family. Homodimer. It depends on Zn(2+) as a cofactor.

The protein localises to the cytoplasm. The catalysed reaction is tRNA(Thr) + L-threonine + ATP = L-threonyl-tRNA(Thr) + AMP + diphosphate + H(+). Catalyzes the attachment of threonine to tRNA(Thr) in a two-step reaction: L-threonine is first activated by ATP to form Thr-AMP and then transferred to the acceptor end of tRNA(Thr). Also edits incorrectly charged L-seryl-tRNA(Thr). The protein is Threonine--tRNA ligase of Francisella tularensis subsp. mediasiatica (strain FSC147).